Reading from the N-terminus, the 346-residue chain is Quinolinate synthase (346 aa).

Residues histidine 47 and serine 68 each coordinate iminosuccinate. Cysteine 113 serves as a coordination point for [4Fe-4S] cluster. Residues 139-141 (YAN) and serine 156 each bind iminosuccinate. Cysteine 200 provides a ligand contact to [4Fe-4S] cluster. Residues 226–228 (HPE) and threonine 243 contribute to the iminosuccinate site. A [4Fe-4S] cluster-binding site is contributed by cysteine 297.

This sequence belongs to the quinolinate synthase family. Type 1 subfamily. Requires [4Fe-4S] cluster as cofactor.

Its subcellular location is the cytoplasm. The enzyme catalyses iminosuccinate + dihydroxyacetone phosphate = quinolinate + phosphate + 2 H2O + H(+). It participates in cofactor biosynthesis; NAD(+) biosynthesis; quinolinate from iminoaspartate: step 1/1. Catalyzes the condensation of iminoaspartate with dihydroxyacetone phosphate to form quinolinate. The protein is Quinolinate synthase of Photorhabdus laumondii subsp. laumondii (strain DSM 15139 / CIP 105565 / TT01) (Photorhabdus luminescens subsp. laumondii).